We begin with the raw amino-acid sequence, 376 residues long: MAKEIESATDLGDTNIKGVLVHGGRYFQYNVYGNLFEVSNKYVPPIRPIGRGAYGFVCAAVDSETHEEIAIKKIGKAFDNKVDAKRTLREIKLLRHLEHENVVVIKDIIRPPKKEDFVDVYIVFELMDTDLHQIIRSNQSLNDDHCQYFLYQILRGLKYIHSANVLHRDLKPSNLLLNSNCDLKITDFGLARTTSETEYMTEYVVTRWYRAPELLLNSSEYTSAIDVWSVGCIFAEIMTREPLFPGKDYVHQLKLITELIGSPDGASLEFLRSANARKYVKELPKFPRQNFSARFPSMNSTAIDLLEKMLVFDPVKRITVEEALCYPYLSALHDLNDEPVCSNHFSFHFEDPSSTEEEIKELVWLESVKFNPLPSI.

In terms of domain architecture, Protein kinase spans 43–329; the sequence is VPPIRPIGRG…VEEALCYPYL (287 aa). ATP is bound by residues 49–57 and K72; that span reads IGRGAYGFV. D169 serves as the catalytic Proton acceptor. T201 bears the Phosphothreonine mark. The short motif at 201 to 203 is the TXY element; that stretch reads TEY. Phosphotyrosine is present on Y203. T206 is modified (phosphothreonine).

The protein belongs to the protein kinase superfamily. CMGC Ser/Thr protein kinase family. MAP kinase subfamily. In terms of processing, autophosphorylated on threonine and tyrosine residues. Dually phosphorylated on Thr-201 and Tyr-203, which activates the enzyme.

The catalysed reaction is L-seryl-[protein] + ATP = O-phospho-L-seryl-[protein] + ADP + H(+). The enzyme catalyses L-threonyl-[protein] + ATP = O-phospho-L-threonyl-[protein] + ADP + H(+). Its activity is regulated as follows. Activated by threonine and tyrosine phosphorylation. Activated by the MAP kinase kinase MKK2. Activated by the MAP kinase kinase MKK6 in vitro. In Arabidopsis thaliana (Mouse-ear cress), this protein is Mitogen-activated protein kinase 5 (MPK5).